Consider the following 188-residue polypeptide: Preprocaerulein type-1 (188 aa).

Residues 1–26 (MFKGILLCVLFAVLSANPLSQPEGFA) form the signal peptide. The propeptide occupies 27–170 (DEERDVRGLA…ANDERRFADG (144 aa)). The disordered stretch occupies residues 152–188 (LGGSPQQREANDERRFADGQQDYTGWMDFGRRNGEDD). Position 174 is a sulfotyrosine (tyrosine 174). Phenylalanine amide is present on phenylalanine 180. The propeptide occupies 184–188 (NGEDD).

Belongs to the gastrin/cholecystokinin family. Expressed by the skin glands.

The protein resides in the secreted. The pharmacological activities of caerulein are quite similar to the physiological activities of gastrin and related peptides. This is Preprocaerulein type-1 from Xenopus laevis (African clawed frog).